Here is a 430-residue protein sequence, read N- to C-terminus: Maintenance of mitochondrial morphology protein 1 (430 aa).

The Lumenal segment spans residues 1–82; that stretch reads MTEIDPNINE…ISNTWNFTQG (82 aa). A helical membrane pass occupies residues 83–103; sequence LVVGQLSVIFLIIIFVKFFVF. At 104-430 the chain is on the cytoplasmic side; the sequence is ADSSSSIPSK…AKPKDSDDTL (327 aa). Composition is skewed to basic and acidic residues over residues 126 to 138 and 335 to 346; these read RDNKSTTSRDRHN and ENGKGSSSEDKK. Disordered regions lie at residues 126–154 and 315–346; these read RDNKSTTSRDRHNGIGGKDSNLEPSTDDE and QADQVARPSNGHTSTDNGNDENGKGSSSEDKK. The region spanning 178 to 408 is the SMP-LTD domain; it reads ASESLDWFNV…EPRFQVVKLP (231 aa).

The protein belongs to the MMM1 family. As to quaternary structure, homodimer. Component of the ER-mitochondria encounter structure (ERMES) or MDM complex, composed of MMM1, MDM10, MDM12 and MDM34. An MMM1 homodimer associates with one molecule of MDM12 on each side in a pairwise head-to-tail manner, and the SMP-LTD domains of MMM1 and MDM12 generate a continuous hydrophobic tunnel for phospholipid trafficking.

It localises to the endoplasmic reticulum membrane. Functionally, component of the ERMES/MDM complex, which serves as a molecular tether to connect the endoplasmic reticulum (ER) and mitochondria. Components of this complex are involved in the control of mitochondrial shape and protein biogenesis, and function in nonvesicular lipid trafficking between the ER and mitochondria. The MDM12-MMM1 subcomplex functions in the major beta-barrel assembly pathway that is responsible for biogenesis of all outer membrane beta-barrel proteins, and acts in a late step after the SAM complex. The MDM10-MDM12-MMM1 subcomplex further acts in the TOM40-specific pathway after the action of the MDM12-MMM1 complex. Essential for establishing and maintaining the structure of mitochondria and maintenance of mtDNA nucleoids. This Lodderomyces elongisporus (strain ATCC 11503 / CBS 2605 / JCM 1781 / NBRC 1676 / NRRL YB-4239) (Yeast) protein is Maintenance of mitochondrial morphology protein 1.